The chain runs to 122 residues: Small ribosomal subunit protein uS13 (122 aa).

Residues 98–122 form a disordered region; sequence VRGQRTHTNARTRKGPAKAIAGKKK.

It belongs to the universal ribosomal protein uS13 family. In terms of assembly, part of the 30S ribosomal subunit. Forms a loose heterodimer with protein S19. Forms two bridges to the 50S subunit in the 70S ribosome.

Functionally, located at the top of the head of the 30S subunit, it contacts several helices of the 16S rRNA. In the 70S ribosome it contacts the 23S rRNA (bridge B1a) and protein L5 of the 50S subunit (bridge B1b), connecting the 2 subunits; these bridges are implicated in subunit movement. Contacts the tRNAs in the A and P-sites. The protein is Small ribosomal subunit protein uS13 of Ruegeria sp. (strain TM1040) (Silicibacter sp.).